The primary structure comprises 45 residues: DNA replication protein repEB (45 aa).

Its function is as follows. Involved in T4 DNA replication. Important for the priming of leading strand DNA synthesis at oriE. Binds to ssDNA. This Enterobacteria phage T4 (Bacteriophage T4) protein is DNA replication protein repEB (repEB).